A 755-amino-acid chain; its full sequence is Dynamin-1-like protein (755 aa).

M1 bears the N-acetylmethionine mark. The Dynamin-type G domain maps to 22–315; that stretch reads IIQLPQIVVV…LMHHIRDCLP (294 aa). Residues 32–39 are G1 motif; sequence GTQSSGKS. 32-40 serves as a coordination point for GTP; sequence GTQSSGKSS. The interval 58 to 60 is G2 motif; it reads VTR. The interval 159-162 is G3 motif; it reads DLPG. Residues 228–231 are G4 motif; sequence TKLD. Residues 228–234 and 259–262 each bind GTP; these read TKLDLMD and NRSQ. The tract at residues 258-261 is G5 motif; the sequence is VNRS. The segment at 357–502 is middle domain; it reads YCNTIEGTAK…NEMVHNLVAI (146 aa). The interval 461 to 704 is interaction with GSK3B; the sequence is NYSTQELLRF…NHVKDTLQSE (244 aa). The b domain stretch occupies residues 515–582; that stretch reads ADACGLMNNN…IQDNRRETKN (68 aa). A disordered region spans residues 536-610; sequence ELPSAVSRDK…QEPTTGNWRG (75 aa). A Phosphoserine modification is found at S542. Residues K545 and K548 each participate in a glycyl lysine isopeptide (Lys-Gly) (interchain with G-Cter in SUMO) cross-link. A compositionally biased stretch (low complexity) spans 550-567; the sequence is PSALAPASQEPSPAASAE. Position 561 is a phosphoserine (S561). Residues 568–581 are compositionally biased toward basic and acidic residues; sequence ADGKLIQDNRRETK. Residues K571 and K581 each participate in a glycyl lysine isopeptide (Lys-Gly) (interchain with G-Cter in SUMO) cross-link. A compositionally biased stretch (gly residues) spans 586–600; that stretch reads AGGGIGDGGRIGDGG. T604 and T605 each carry an O-linked (GlcNAc) threonine glycan. Residue K613 forms a Glycyl lysine isopeptide (Lys-Gly) (interchain with G-Cter in SUMO) linkage. K616 carries the N6-acetyllysine; alternate modification. K616 is covalently cross-linked (Glycyl lysine isopeptide (Lys-Gly) (interchain with G-Cter in SUMO); alternate). A Glycyl lysine isopeptide (Lys-Gly) (interchain with G-Cter in SUMO) cross-link involves residue K625. S626 is modified (phosphoserine). Residue K627 forms a Glycyl lysine isopeptide (Lys-Gly) (interchain with G-Cter in SUMO) linkage. S635 is subject to Phosphoserine; by CDK1. A Phosphoserine; by CAMK1 and PKA modification is found at S656. S-nitrosocysteine is present on C663. In terms of domain architecture, GED spans 663 to 754; it reads CEVIERLIKS…IIAEIRETHL (92 aa). The tract at residues 673 to 687 is important for homodimerization; that stretch reads YFLIVRKNIQDSVPK.

It belongs to the TRAFAC class dynamin-like GTPase superfamily. Dynamin/Fzo/YdjA family. Homotetramer; dimerizes through the N-terminal GTP-middle region of one molecule binding to the GED domain of another DNM1L molecule. Oligomerizes in a GTP-dependent manner to form membrane-associated tubules with a spiral pattern. Interacts with GSK3B and MARCHF5. Interacts (via the GTPase and B domains) with UBE2I; the interaction promotes sumoylation of DNM1L, mainly in its B domain. Interacts with PPP3CA; the interaction dephosphorylates DNM1L and regulates its transition to mitochondria. Interacts with BCL2L1 isoform BCL-X(L) and CLTA; DNM1L and BCL2L1 isoform BCL-X(L) may form a complex in synaptic vesicles that also contains clathrin and MFF. Interacts with MFF; the interaction is inhinited by C11orf65/MFI. Interacts with FIS1. Interacts with MIEF2 and MIEF1; GTP-dependent this regulates GTP hydrolysis and DNM1L oligomerization. Interacts with PGAM5; this interaction leads to dephosphorylation at Ser-656 and activation of GTPase activity and eventually to mitochondria fragmentation. Interacts with RALBP1; during mitosis, recruits DNM1L to the mitochondrion and mediates its activation by the mitotic kinase cyclin B-CDK1. Interacts with FUNDC1; this interaction recruits DNM1L/DRP1 at ER-mitochondria contact sites. In terms of processing, phosphorylation/dephosphorylation events on two sites near the GED domain regulate mitochondrial fission. Phosphorylation on Ser-656 by CAMK1 and PKA inhibits the GTPase activity, leading to a defect in mitochondrial fission promoting mitochondrial elongation. Dephosphorylated on this site by PPP3CA which promotes mitochondrial fission. Phosphorylation on Ser-635 by PINK1 activates the GTPase activity and promotes mitochondrial fission. Phosphorylation on Ser-635 by CDK1 also promotes mitochondrial fission. Phosphorylated in a circadian manner at Ser-656. Dephosphorylated by PGAM5. Sumoylated on various lysine residues within the B domain, probably by MUL1. Sumoylation positively regulates mitochondrial fission. Desumoylated by SENP5 during G2/M transition of mitosis. Appears to be linked to its catalytic activity. Post-translationally, S-nitrosylation increases DNM1L dimerization, mitochondrial fission and causes neuronal damage. In terms of processing, O-GlcNAcylation augments the level of the GTP-bound active form of DNM1L and induces translocation from the cytoplasm to mitochondria in cardiomyocytes. It also decreases phosphorylation at Ser-656. Ubiquitination by MARCHF5 affects mitochondrial morphology. As to expression, expressed in all tissues tested (at protein level). Longer isoforms are preferentially expressed in brain.

It is found in the cytoplasm. The protein resides in the cytosol. It localises to the golgi apparatus. Its subcellular location is the endomembrane system. The protein localises to the mitochondrion outer membrane. It is found in the peroxisome. The protein resides in the membrane. It localises to the clathrin-coated pit. Its subcellular location is the cytoplasmic vesicle. The protein localises to the secretory vesicle. It is found in the synaptic vesicle membrane. It catalyses the reaction GTP + H2O = GDP + phosphate + H(+). In terms of biological role, functions in mitochondrial and peroxisomal division. Mediates membrane fission through oligomerization into membrane-associated tubular structures that wrap around the scission site to constrict and sever the mitochondrial membrane through a GTP hydrolysis-dependent mechanism. The specific recruitment at scission sites is mediated by membrane receptors like MFF, MIEF1 and MIEF2 for mitochondrial membranes. While the recruitment by the membrane receptors is GTP-dependent, the following hydrolysis of GTP induces the dissociation from the receptors and allows DNM1L filaments to curl into closed rings that are probably sufficient to sever a double membrane. Acts downstream of PINK1 to promote mitochondrial fission in a PRKN-dependent manner. Plays an important role in mitochondrial fission during mitosis. Through its function in mitochondrial division, ensures the survival of at least some types of postmitotic neurons, including Purkinje cells, by suppressing oxidative damage. Required for normal brain development, including that of cerebellum. Facilitates developmentally regulated apoptosis during neural tube formation. Required for a normal rate of cytochrome c release and caspase activation during apoptosis; this requirement may depend upon the cell type and the physiological apoptotic cues. Required for formation of endocytic vesicles. Proposed to regulate synaptic vesicle membrane dynamics through association with BCL2L1 isoform Bcl-X(L) which stimulates its GTPase activity in synaptic vesicles; the function may require its recruitment by MFF to clathrin-containing vesicles. Required for programmed necrosis execution. Rhythmic control of its activity following phosphorylation at Ser-656 is essential for the circadian control of mitochondrial ATP production. This Rattus norvegicus (Rat) protein is Dynamin-1-like protein.